Reading from the N-terminus, the 219-residue chain is Glycerol-3-phosphate acyltransferase 2 (219 aa).

The next 5 helical transmembrane spans lie at 1 to 21 (MVFW…GSTP), 55 to 75 (WPAL…VVFA), 93 to 113 (ALDL…AVLL), 135 to 155 (VLLA…GVAL), and 160 to 180 (IVSL…CGLE).

The protein belongs to the PlsY family. As to quaternary structure, probably interacts with PlsX.

The protein resides in the cell inner membrane. The enzyme catalyses an acyl phosphate + sn-glycerol 3-phosphate = a 1-acyl-sn-glycero-3-phosphate + phosphate. Its pathway is lipid metabolism; phospholipid metabolism. Functionally, catalyzes the transfer of an acyl group from acyl-phosphate (acyl-PO(4)) to glycerol-3-phosphate (G3P) to form lysophosphatidic acid (LPA). This enzyme utilizes acyl-phosphate as fatty acyl donor, but not acyl-CoA or acyl-ACP. This Rhizobium johnstonii (strain DSM 114642 / LMG 32736 / 3841) (Rhizobium leguminosarum bv. viciae) protein is Glycerol-3-phosphate acyltransferase 2.